The chain runs to 414 residues: Cell division protein FtsA (414 aa).

This sequence belongs to the FtsA/MreB family. Self-interacts. Interacts with FtsZ.

It localises to the cell inner membrane. In terms of biological role, cell division protein that is involved in the assembly of the Z ring. May serve as a membrane anchor for the Z ring. This Neisseria meningitidis serogroup B (strain ATCC BAA-335 / MC58) protein is Cell division protein FtsA.